Reading from the N-terminus, the 456-residue chain is High mobility group B protein 6 (456 aa).

Disordered stretches follow at residues 1–42, 117–142, 238–258, and 349–389; these read MATN…KSAK, SSLT…KRPS, AEQD…PKHP, and MLKK…YFLF. Residues 11–21 show a composition bias toward basic residues; it reads KKPRNSRKALK. A DNA-binding region (HMG box 1) is located at residues 138 to 206; sequence TKRPSSSYVL…AYLQVIAKEK (69 aa). The span at 240–254 shows a compositional bias: basic and acidic residues; that stretch reads QDNKKKNKKEKDPLK. The HMG box 2 DNA-binding region spans 255–321; that stretch reads PKHPVSAFLV…TYLQAMEEYK (67 aa). Residues 354–363 show a composition bias toward basic and acidic residues; that stretch reads EKTDNLIKKE. Residues 379-447 constitute a DNA-binding region (HMG box 3); that stretch reads PKKPASSYFL…AYKKEVEAYN (69 aa).

It is found in the nucleus. The polypeptide is High mobility group B protein 6 (HMGB6) (Arabidopsis thaliana (Mouse-ear cress)).